Reading from the N-terminus, the 492-residue chain is Probable cytochrome P450 313a1 (492 aa).

Cys-438 contributes to the heme binding site.

This sequence belongs to the cytochrome P450 family. Heme is required as a cofactor.

The protein localises to the endoplasmic reticulum membrane. It localises to the microsome membrane. May be involved in the metabolism of insect hormones and in the breakdown of synthetic insecticides. The sequence is that of Probable cytochrome P450 313a1 (Cyp313a1) from Drosophila melanogaster (Fruit fly).